The sequence spans 347 residues: Anthranilate phosphoribosyltransferase (347 aa).

5-phospho-alpha-D-ribose 1-diphosphate contacts are provided by residues Gly-88, 91–92 (GD), Thr-96, 98–101 (NIST), 116–124 (KHGNRSVSS), and Ser-128. Gly-88 provides a ligand contact to anthranilate. A Mg(2+)-binding site is contributed by Ser-100. Residue Asn-119 participates in anthranilate binding. Arg-174 provides a ligand contact to anthranilate. Asp-232 and Glu-233 together coordinate Mg(2+).

This sequence belongs to the anthranilate phosphoribosyltransferase family. Homodimer. The cofactor is Mg(2+).

The catalysed reaction is N-(5-phospho-beta-D-ribosyl)anthranilate + diphosphate = 5-phospho-alpha-D-ribose 1-diphosphate + anthranilate. It functions in the pathway amino-acid biosynthesis; L-tryptophan biosynthesis; L-tryptophan from chorismate: step 2/5. Catalyzes the transfer of the phosphoribosyl group of 5-phosphorylribose-1-pyrophosphate (PRPP) to anthranilate to yield N-(5'-phosphoribosyl)-anthranilate (PRA). This chain is Anthranilate phosphoribosyltransferase, found in Shewanella sp. (strain ANA-3).